The following is a 255-amino-acid chain: Large ribosomal subunit protein uL4 (255 aa).

This sequence belongs to the universal ribosomal protein uL4 family. As to quaternary structure, part of the 50S ribosomal subunit.

In terms of biological role, one of the primary rRNA binding proteins, this protein initially binds near the 5'-end of the 23S rRNA. It is important during the early stages of 50S assembly. It makes multiple contacts with different domains of the 23S rRNA in the assembled 50S subunit and ribosome. Forms part of the polypeptide exit tunnel. The chain is Large ribosomal subunit protein uL4 from Thermococcus onnurineus (strain NA1).